The following is a 312-amino-acid chain: Serpentine receptor class gamma-31 (312 aa).

7 consecutive transmembrane segments (helical) span residues 6–26 (LITQ…TVVF), 38–58 (FLKL…NFYI), 92–112 (FIFC…LTSI), 132–152 (TYIL…PLLV), 180–200 (FILV…IICW), 218–238 (LFLV…IAML), and 259–279 (LLSP…LIIF).

It belongs to the nematode receptor-like protein srg family.

The protein localises to the membrane. This chain is Serpentine receptor class gamma-31 (srg-31), found in Caenorhabditis elegans.